The chain runs to 251 residues: Hydroxyacylglutathione hydrolase (251 aa).

Residues histidine 53, histidine 55, aspartate 57, histidine 58, histidine 110, aspartate 127, and histidine 165 each coordinate Zn(2+).

It belongs to the metallo-beta-lactamase superfamily. Glyoxalase II family. As to quaternary structure, monomer. The cofactor is Zn(2+).

It carries out the reaction an S-(2-hydroxyacyl)glutathione + H2O = a 2-hydroxy carboxylate + glutathione + H(+). It participates in secondary metabolite metabolism; methylglyoxal degradation; (R)-lactate from methylglyoxal: step 2/2. Thiolesterase that catalyzes the hydrolysis of S-D-lactoyl-glutathione to form glutathione and D-lactic acid. The sequence is that of Hydroxyacylglutathione hydrolase from Citrobacter koseri (strain ATCC BAA-895 / CDC 4225-83 / SGSC4696).